Reading from the N-terminus, the 398-residue chain is Spermatogenesis associated 6-like protein (398 aa).

The segment at 170 to 215 (KLNGPANNRKKKPKEKNSDQLSKGTPFWGPSPQRLHLHRPTQRNPG) is disordered. Ser269 and Ser272 each carry phosphoserine.

This sequence belongs to the SPATA6 family.

In Rattus norvegicus (Rat), this protein is Spermatogenesis associated 6-like protein (Spata6l).